The primary structure comprises 207 residues: MFKGMLGKKIGMTSIFAADGTLVPVTVVRFGPCVVTQVKAEKTDGYNALQLGFDERALAKCNKPKVGHFSKSGSTGFNVVREFRVENTDEFEVGQNIGLDGFAIGDKVNVSGTSKGRGFAGTIKRHGFSRGPETHGCRNHRKPGSIGCSAWPARVVKGRRMPGHMGVDRKTVKNLEIIDIRPDENLVMIKGPVPGWKTGLLEIRKAV.

It belongs to the universal ribosomal protein uL3 family. As to quaternary structure, part of the 50S ribosomal subunit. Forms a cluster with proteins L14 and L19.

One of the primary rRNA binding proteins, it binds directly near the 3'-end of the 23S rRNA, where it nucleates assembly of the 50S subunit. In Desulforapulum autotrophicum (strain ATCC 43914 / DSM 3382 / VKM B-1955 / HRM2) (Desulfobacterium autotrophicum), this protein is Large ribosomal subunit protein uL3.